A 218-amino-acid polypeptide reads, in one-letter code: Probable transaldolase (218 aa).

Catalysis depends on lysine 83, which acts as the Schiff-base intermediate with substrate.

Belongs to the transaldolase family. Type 3B subfamily.

Its subcellular location is the cytoplasm. It catalyses the reaction D-sedoheptulose 7-phosphate + D-glyceraldehyde 3-phosphate = D-erythrose 4-phosphate + beta-D-fructose 6-phosphate. Its pathway is carbohydrate degradation; pentose phosphate pathway; D-glyceraldehyde 3-phosphate and beta-D-fructose 6-phosphate from D-ribose 5-phosphate and D-xylulose 5-phosphate (non-oxidative stage): step 2/3. Functionally, transaldolase is important for the balance of metabolites in the pentose-phosphate pathway. The protein is Probable transaldolase of Thermotoga sp. (strain RQ2).